A 287-amino-acid polypeptide reads, in one-letter code: Undecaprenyl-diphosphatase (287 aa).

The next 7 membrane-spanning stretches (helical) occupy residues 50-70 (PGVS…IAYF), 97-117 (LGFA…GIKF), 131-151 (IPSI…AEQV), 160-180 (VVLG…LLPG), 206-226 (FLLG…DALA), 234-254 (LPLL…IDWL), and 264-284 (WLFV…WGVY).

Belongs to the UppP family.

It localises to the cell inner membrane. The catalysed reaction is di-trans,octa-cis-undecaprenyl diphosphate + H2O = di-trans,octa-cis-undecaprenyl phosphate + phosphate + H(+). In terms of biological role, catalyzes the dephosphorylation of undecaprenyl diphosphate (UPP). Confers resistance to bacitracin. The polypeptide is Undecaprenyl-diphosphatase (Synechococcus sp. (strain CC9605)).